The primary structure comprises 461 residues: Bifunctional protein GlmU (461 aa).

The tract at residues 1 to 229 is pyrophosphorylase; it reads MEKYVVVLAA…FSESLGVNDR (229 aa). UDP-N-acetyl-alpha-D-glucosamine-binding positions include 8–11, lysine 22, glutamine 72, and 77–78; these read LAAG and GT. Mg(2+) is bound at residue aspartate 102. 4 residues coordinate UDP-N-acetyl-alpha-D-glucosamine: glycine 139, glutamate 154, asparagine 169, and asparagine 227. A Mg(2+)-binding site is contributed by asparagine 227. The tract at residues 230 to 250 is linker; the sequence is IALAEATRIMQRRINEGHMRD. An N-acetyltransferase region spans residues 251 to 461; it reads GVTFIDPATA…LPLSEDEEWK (211 aa). Positions 332 and 350 each coordinate UDP-N-acetyl-alpha-D-glucosamine. Histidine 362 functions as the Proton acceptor in the catalytic mechanism. Residues tyrosine 365 and asparagine 376 each contribute to the UDP-N-acetyl-alpha-D-glucosamine site. Positions 422 and 439 each coordinate acetyl-CoA.

This sequence in the N-terminal section; belongs to the N-acetylglucosamine-1-phosphate uridyltransferase family. The protein in the C-terminal section; belongs to the transferase hexapeptide repeat family. As to quaternary structure, homotrimer. It depends on Mg(2+) as a cofactor.

It localises to the cytoplasm. The catalysed reaction is alpha-D-glucosamine 1-phosphate + acetyl-CoA = N-acetyl-alpha-D-glucosamine 1-phosphate + CoA + H(+). It carries out the reaction N-acetyl-alpha-D-glucosamine 1-phosphate + UTP + H(+) = UDP-N-acetyl-alpha-D-glucosamine + diphosphate. Its pathway is nucleotide-sugar biosynthesis; UDP-N-acetyl-alpha-D-glucosamine biosynthesis; N-acetyl-alpha-D-glucosamine 1-phosphate from alpha-D-glucosamine 6-phosphate (route II): step 2/2. It functions in the pathway nucleotide-sugar biosynthesis; UDP-N-acetyl-alpha-D-glucosamine biosynthesis; UDP-N-acetyl-alpha-D-glucosamine from N-acetyl-alpha-D-glucosamine 1-phosphate: step 1/1. The protein operates within bacterial outer membrane biogenesis; LPS lipid A biosynthesis. Functionally, catalyzes the last two sequential reactions in the de novo biosynthetic pathway for UDP-N-acetylglucosamine (UDP-GlcNAc). The C-terminal domain catalyzes the transfer of acetyl group from acetyl coenzyme A to glucosamine-1-phosphate (GlcN-1-P) to produce N-acetylglucosamine-1-phosphate (GlcNAc-1-P), which is converted into UDP-GlcNAc by the transfer of uridine 5-monophosphate (from uridine 5-triphosphate), a reaction catalyzed by the N-terminal domain. This chain is Bifunctional protein GlmU, found in Lactobacillus delbrueckii subsp. bulgaricus (strain ATCC 11842 / DSM 20081 / BCRC 10696 / JCM 1002 / NBRC 13953 / NCIMB 11778 / NCTC 12712 / WDCM 00102 / Lb 14).